We begin with the raw amino-acid sequence, 376 residues long: TATA box-binding protein-like 2 (376 aa).

The disordered stretch occupies residues 103–184 (PDEVTQENKD…SDSLSLASIT (82 aa)). Residues 108–122 (QENKDQPVISKHETE) show a composition bias toward basic and acidic residues. Over residues 126-159 (ESQSPQSRLPSPSEQDVGLGLNSSSLSNSHSQLH) the composition is skewed to low complexity. Polar residues predominate over residues 175–184 (SDSLSLASIT).

The protein belongs to the TBP family. In terms of assembly, interacts with TAF3.

The protein localises to the cytoplasm. It localises to the nucleus. Functionally, transcription factor required in complex with TAF3 for the differentiation of myoblasts into myocytes. The complex replaces TFIID at specific promoters at an early stage in the differentiation process. The protein is TATA box-binding protein-like 2 of Pan troglodytes (Chimpanzee).